Reading from the N-terminus, the 171-residue chain is uncharacterized protein (171 aa).

The protein belongs to the mimivirus L87/L94 family.

This is an uncharacterized protein from Acanthamoeba polyphaga (Amoeba).